A 267-amino-acid chain; its full sequence is Tryptophan synthase alpha chain (267 aa).

Catalysis depends on proton acceptor residues glutamate 43 and aspartate 54.

Belongs to the TrpA family. As to quaternary structure, tetramer of two alpha and two beta chains.

It catalyses the reaction (1S,2R)-1-C-(indol-3-yl)glycerol 3-phosphate + L-serine = D-glyceraldehyde 3-phosphate + L-tryptophan + H2O. The protein operates within amino-acid biosynthesis; L-tryptophan biosynthesis; L-tryptophan from chorismate: step 5/5. In terms of biological role, the alpha subunit is responsible for the aldol cleavage of indoleglycerol phosphate to indole and glyceraldehyde 3-phosphate. The protein is Tryptophan synthase alpha chain of Bacillus subtilis subsp. natto.